Reading from the N-terminus, the 556-residue chain is Copine-7 (556 aa).

2 C2 domains span residues 1-128 (MSGD…TRPL) and 135-262 (NAGK…AQWD). Ca(2+) contacts are provided by Asp-168, Asp-174, Asp-230, Asp-232, and Asp-238. The VWFA domain maps to 305-504 (HCTVAIDFTA…PALRDIVQFV (200 aa)). The segment at 536–556 (KDLPPRSLGGQTGEAGPSSAP) is disordered.

The protein belongs to the copine family. Ca(2+) is required as a cofactor.

Its subcellular location is the cytoplasm. It localises to the nucleus. The protein localises to the cell membrane. In terms of biological role, calcium-dependent phospholipid-binding protein that may play a role in calcium-mediated intracellular processes. The polypeptide is Copine-7 (Rattus norvegicus (Rat)).